A 226-amino-acid polypeptide reads, in one-letter code: Deoxyribose-phosphate aldolase (226 aa).

Asp-84 serves as the catalytic Proton donor/acceptor. Residue Lys-146 is the Schiff-base intermediate with acetaldehyde of the active site. The active-site Proton donor/acceptor is the Lys-188.

It belongs to the DeoC/FbaB aldolase family. DeoC type 1 subfamily. In terms of assembly, homodimer.

Its subcellular location is the cytoplasm. The enzyme catalyses 2-deoxy-D-ribose 5-phosphate = D-glyceraldehyde 3-phosphate + acetaldehyde. Its pathway is carbohydrate degradation; 2-deoxy-D-ribose 1-phosphate degradation; D-glyceraldehyde 3-phosphate and acetaldehyde from 2-deoxy-alpha-D-ribose 1-phosphate: step 2/2. Functionally, catalyzes a reversible aldol reaction between acetaldehyde and D-glyceraldehyde 3-phosphate to generate 2-deoxy-D-ribose 5-phosphate. In Pyrobaculum aerophilum (strain ATCC 51768 / DSM 7523 / JCM 9630 / CIP 104966 / NBRC 100827 / IM2), this protein is Deoxyribose-phosphate aldolase.